Reading from the N-terminus, the 327-residue chain is Mitochondrial coenzyme A transporter SLC25A42 (327 aa).

Solcar repeat units follow at residues 34–120 (KSIL…YKKL), 132–217 (LTPI…LKKL), and 227–315 (PYPF…TQIL). Transmembrane regions (helical) follow at residues 36–56 (ILNS…AVAP), 92–112 (LWRG…IQFC), 138–158 (LLAG…LDLV), 189–209 (LYRG…ISFF), 233–253 (LLFG…LDVV), and 296–316 (VKGP…QILL).

The protein belongs to the mitochondrial carrier (TC 2.A.29) family.

Its subcellular location is the mitochondrion inner membrane. The enzyme catalyses ADP(out) + CoA(in) = ADP(in) + CoA(out). It catalyses the reaction 3'-dephospho-CoA(in) + ADP(out) = 3'-dephospho-CoA(out) + ADP(in). The catalysed reaction is adenosine 3',5'-bisphosphate(in) + ADP(out) = adenosine 3',5'-bisphosphate(out) + ADP(in). It carries out the reaction AMP(in) + ADP(out) = AMP(out) + ADP(in). The enzyme catalyses dADP(in) + ADP(out) = dADP(out) + ADP(in). It catalyses the reaction ADP(in) + ATP(out) = ADP(out) + ATP(in). Its function is as follows. Mitochondrial carrier mediating the transport of coenzyme A (CoA) in mitochondria in exchange for intramitochondrial (deoxy)adenine nucleotides and adenosine 3',5'-diphosphate. The chain is Mitochondrial coenzyme A transporter SLC25A42 (slc25a42) from Xenopus tropicalis (Western clawed frog).